The following is a 155-amino-acid chain: MRLVIVAVGQRVPDWAQTAWDDYAKRFPFELKVELKAVKTEPRGSKTVEALVAAERGRIEAALPKGCRIVALDERGTPLTTLALAAKLQNWQLESDDVALVIGGPDGLDPAFKQAAHERIRLSDLTLPHAMVRVLLIEQLYRAWSINANHPYHRE.

S-adenosyl-L-methionine contacts are provided by residues leucine 72, glycine 103, and 122-127 (LSDLTL).

The protein belongs to the RNA methyltransferase RlmH family. Homodimer.

Its subcellular location is the cytoplasm. The enzyme catalyses pseudouridine(1915) in 23S rRNA + S-adenosyl-L-methionine = N(3)-methylpseudouridine(1915) in 23S rRNA + S-adenosyl-L-homocysteine + H(+). In terms of biological role, specifically methylates the pseudouridine at position 1915 (m3Psi1915) in 23S rRNA. The protein is Ribosomal RNA large subunit methyltransferase H of Albidiferax ferrireducens (strain ATCC BAA-621 / DSM 15236 / T118) (Rhodoferax ferrireducens).